A 476-amino-acid polypeptide reads, in one-letter code: Probable pectin lyase F (476 aa).

A signal peptide spans Met-1–Ala-20. An intrachain disulfide couples Cys-84 to Cys-108. Residues Asn-103 and Asn-131 are each glycosylated (N-linked (GlcNAc...) asparagine). Residue Arg-258 is part of the active site. N-linked (GlcNAc...) asparagine glycosylation is found at Asn-277 and Asn-318. A disulfide bridge connects residues Cys-325 and Cys-333. Residue Asn-385 is glycosylated (N-linked (GlcNAc...) asparagine). Positions Phe-412–Tyr-476 are disordered. Polar residues predominate over residues Val-426 to Ala-453. Basic residues predominate over residues Asn-465–Tyr-476.

This sequence belongs to the polysaccharide lyase 1 family.

Its subcellular location is the secreted. The enzyme catalyses Eliminative cleavage of (1-&gt;4)-alpha-D-galacturonan methyl ester to give oligosaccharides with 4-deoxy-6-O-methyl-alpha-D-galact-4-enuronosyl groups at their non-reducing ends.. Pectinolytic enzymes consist of four classes of enzymes: pectin lyase, polygalacturonase, pectin methylesterase and rhamnogalacturonase. Among pectinolytic enzymes, pectin lyase is the most important in depolymerization of pectin, since it cleaves internal glycosidic bonds of highly methylated pectins. This chain is Probable pectin lyase F (pelF), found in Aspergillus niger (strain ATCC MYA-4892 / CBS 513.88 / FGSC A1513).